A 219-amino-acid polypeptide reads, in one-letter code: UPF0173 metal-dependent hydrolase LSL_0324 (219 aa).

It belongs to the UPF0173 family.

In Ligilactobacillus salivarius (strain UCC118) (Lactobacillus salivarius), this protein is UPF0173 metal-dependent hydrolase LSL_0324.